The primary structure comprises 803 residues: Early 94 kDa protein (803 aa).

In Lepidoptera (butterflies and moths), this protein is Early 94 kDa protein.